Reading from the N-terminus, the 241-residue chain is MAEASFYIGVIGNVISVLVFLSPVETFWKIVKRRSTEEYKSLPYICTLLGSSLWTYYGIVTPGEYLVSTVNGFGALVETIYVSLFLFYAPRHLKLKTVDVDAMLNVFFPIAAIVATRSAFEDEKMRSQSIGFISAGLNIIMYGSPLSAMKTVVTTKSVKYMPFWLSFFLFLNGAIWAVYALLQHDVFLLVPNGVGFVFGTMQLILYGIYRNAKPVGLSNGLSEIAQDEEEGLTSRVEPLLS.

Residues 1-3 (MAE) are Vacuolar-facing. A helical membrane pass occupies residues 4 to 24 (ASFYIGVIGNVISVLVFLSPV). The 87-residue stretch at 6–92 (FYIGVIGNVI…SLFLFYAPRH (87 aa)) folds into the MtN3/slv 1 domain. Residues 25 to 41 (ETFWKIVKRRSTEEYKS) are Cytoplasmic-facing. Residues 42-62 (LPYICTLLGSSLWTYYGIVTP) form a helical membrane-spanning segment. Topologically, residues 63 to 69 (GEYLVST) are vacuolar. The helical transmembrane segment at 70-90 (VNGFGALVETIYVSLFLFYAP) threads the bilayer. Topologically, residues 91–94 (RHLK) are cytoplasmic. Residues 95 to 115 (LKTVDVDAMLNVFFPIAAIVA) traverse the membrane as a helical segment. The Vacuolar portion of the chain corresponds to 116–128 (TRSAFEDEKMRSQ). A helical membrane pass occupies residues 129-149 (SIGFISAGLNIIMYGSPLSAM). One can recognise a MtN3/slv 2 domain in the interval 129 to 212 (SIGFISAGLN…LILYGIYRNA (84 aa)). The Cytoplasmic portion of the chain corresponds to 150–161 (KTVVTTKSVKYM). A helical membrane pass occupies residues 162-182 (PFWLSFFLFLNGAIWAVYALL). At 183 to 185 (QHD) the chain is on the vacuolar side. A helical membrane pass occupies residues 186–206 (VFLLVPNGVGFVFGTMQLILY). The Cytoplasmic portion of the chain corresponds to 207 to 241 (GIYRNAKPVGLSNGLSEIAQDEEEGLTSRVEPLLS).

This sequence belongs to the SWEET sugar transporter family. In terms of assembly, forms homooligomers and heterooligomers with SWEET1, SWEET2, SWEET3, SWEET4, SWEET6, SWEET7, SWEET8, SWEET9, SWEET11, SWEET12, SWEET13, SWEET15 and SWEET16. In terms of tissue distribution, expressed in leaves at low levels, mostly in xylem and parenchyma. Highly expressed in the cortex of roots, predominantly in tips and mature regions, especially in tonoplasts. Also accumulates in cotyledons, stems, flowers, and siliques.

The protein resides in the vacuole membrane. In terms of biological role, acts as a vacuolar hexose transporter. Regulates fructose (Fru) homeostasis in leaves and roots by exporting/importing Fru through the tonoplast regarding metabolic demand. This Arabidopsis thaliana (Mouse-ear cress) protein is Bidirectional sugar transporter SWEET17.